The sequence spans 224 residues: Probable molybdenum cofactor guanylyltransferase (224 aa).

GTP is bound by residues 20-22 (LAG), K33, D88, and D117. Residue D117 participates in Mg(2+) binding.

The protein belongs to the MobA family. Requires Mg(2+) as cofactor.

It is found in the cytoplasm. It carries out the reaction Mo-molybdopterin + GTP + H(+) = Mo-molybdopterin guanine dinucleotide + diphosphate. In terms of biological role, transfers a GMP moiety from GTP to Mo-molybdopterin (Mo-MPT) cofactor (Moco or molybdenum cofactor) to form Mo-molybdopterin guanine dinucleotide (Mo-MGD) cofactor. This chain is Probable molybdenum cofactor guanylyltransferase, found in Methanosarcina mazei (strain ATCC BAA-159 / DSM 3647 / Goe1 / Go1 / JCM 11833 / OCM 88) (Methanosarcina frisia).